The following is a 440-amino-acid chain: Ribosomal protein uS12 methylthiotransferase RimO (440 aa).

The MTTase N-terminal domain maps to 6–116 (PKVGFVSLGC…VVSAVHEVVP (111 aa)). Positions 15, 51, 80, 149, 153, and 156 each coordinate [4Fe-4S] cluster. Residues 135-374 (LTPRHYAYLK…AHQQAISSAR (240 aa)) enclose the Radical SAM core domain. Residues 376 to 440 (QAKIGLEMDV…DEYDMWGELV (65 aa)) form the TRAM domain.

This sequence belongs to the methylthiotransferase family. RimO subfamily. [4Fe-4S] cluster is required as a cofactor.

It localises to the cytoplasm. It catalyses the reaction L-aspartate(89)-[ribosomal protein uS12]-hydrogen + (sulfur carrier)-SH + AH2 + 2 S-adenosyl-L-methionine = 3-methylsulfanyl-L-aspartate(89)-[ribosomal protein uS12]-hydrogen + (sulfur carrier)-H + 5'-deoxyadenosine + L-methionine + A + S-adenosyl-L-homocysteine + 2 H(+). Functionally, catalyzes the methylthiolation of an aspartic acid residue of ribosomal protein uS12. This Ectopseudomonas mendocina (strain ymp) (Pseudomonas mendocina) protein is Ribosomal protein uS12 methylthiotransferase RimO.